A 118-amino-acid chain; its full sequence is Small ribosomal subunit protein uS13 (118 aa).

A disordered region spans residues 94-118 (SLPLRGQRTKTNARTRKGPRKPIKK).

The protein belongs to the universal ribosomal protein uS13 family. As to quaternary structure, part of the 30S ribosomal subunit. Forms a loose heterodimer with protein S19. Forms two bridges to the 50S subunit in the 70S ribosome.

Located at the top of the head of the 30S subunit, it contacts several helices of the 16S rRNA. In the 70S ribosome it contacts the 23S rRNA (bridge B1a) and protein L5 of the 50S subunit (bridge B1b), connecting the 2 subunits; these bridges are implicated in subunit movement. Contacts the tRNAs in the A and P-sites. The protein is Small ribosomal subunit protein uS13 of Shewanella amazonensis (strain ATCC BAA-1098 / SB2B).